The sequence spans 293 residues: 4-hydroxy-tetrahydrodipicolinate synthase (293 aa).

Thr47 provides a ligand contact to pyruvate. Catalysis depends on Tyr135, which acts as the Proton donor/acceptor. Lys163 (schiff-base intermediate with substrate) is an active-site residue. Val205 is a pyruvate binding site.

The protein belongs to the DapA family. In terms of assembly, homotetramer; dimer of dimers.

It is found in the cytoplasm. The enzyme catalyses L-aspartate 4-semialdehyde + pyruvate = (2S,4S)-4-hydroxy-2,3,4,5-tetrahydrodipicolinate + H2O + H(+). Its pathway is amino-acid biosynthesis; L-lysine biosynthesis via DAP pathway; (S)-tetrahydrodipicolinate from L-aspartate: step 3/4. Its function is as follows. Catalyzes the condensation of (S)-aspartate-beta-semialdehyde [(S)-ASA] and pyruvate to 4-hydroxy-tetrahydrodipicolinate (HTPA). The protein is 4-hydroxy-tetrahydrodipicolinate synthase of Methylibium petroleiphilum (strain ATCC BAA-1232 / LMG 22953 / PM1).